A 549-amino-acid polypeptide reads, in one-letter code: Cobalt-dependent inorganic pyrophosphatase (549 aa).

CBS domains lie at 74–130 (EMDK…IWDS) and 252–310 (MTKD…VIQV). AMP contacts are provided by residues K100, 116–119 (STSN), T253, V258, and 278–280 (YSN).

The protein belongs to the PPase family. In terms of assembly, homodimer. Requires Co(2+) as cofactor. Mn(2+) is required as a cofactor. It depends on Mg(2+) as a cofactor.

It catalyses the reaction diphosphate + H2O = 2 phosphate + H(+). Inhibited by AMP and ADP with 25% and 35% of activity remaining, respectively, at saturating conditions. Activated 5-fold by diadenosine polyphosphates(Ap[n]A) with n&gt;2 (Ap3A, Ap4A, Ap5A, Ap6A) at saturating conditions. The polypeptide is Cobalt-dependent inorganic pyrophosphatase (Clostridium perfringens (strain 13 / Type A)).